The primary structure comprises 573 residues: Phosphoenolpyruvate-protein phosphotransferase (573 aa).

His-190 functions as the Tele-phosphohistidine intermediate in the catalytic mechanism. Substrate is bound by residues Arg-297 and Arg-333. Mg(2+) contacts are provided by Glu-432 and Asp-456. 455–456 provides a ligand contact to phosphoenolpyruvate; it reads ND. Residue Arg-466 coordinates substrate. The active-site Proton donor is Cys-503.

The protein belongs to the PEP-utilizing enzyme family. Homodimer. Mg(2+) is required as a cofactor.

The protein resides in the cytoplasm. The catalysed reaction is L-histidyl-[protein] + phosphoenolpyruvate = N(pros)-phospho-L-histidyl-[protein] + pyruvate. Functionally, general (non sugar-specific) component of the phosphoenolpyruvate-dependent sugar phosphotransferase system (sugar PTS). This major carbohydrate active-transport system catalyzes the phosphorylation of incoming sugar substrates concomitantly with their translocation across the cell membrane. Enzyme I transfers the phosphoryl group from phosphoenolpyruvate (PEP) to the phosphoryl carrier protein (HPr). This chain is Phosphoenolpyruvate-protein phosphotransferase (ptsI), found in Staphylococcus carnosus (strain TM300).